We begin with the raw amino-acid sequence, 433 residues long: Adenylyltransferase and sulfurtransferase UBA4 (433 aa).

ATP is bound by residues G70, D91, 98-102 (SNLHR), K115, and 159-160 (DT). The Zn(2+) site is built by C201 and C204. Catalysis depends on C218, which acts as the Glycyl thioester intermediate; for adenylyltransferase activity. 2 residues coordinate Zn(2+): C279 and C282. A Rhodanese domain is found at 332–431 (SGNNKVLLDV…YIDDVDQSIP (100 aa)). The Cysteine persulfide intermediate; for sulfurtransferase activity role is filled by C390.

In the N-terminal section; belongs to the HesA/MoeB/ThiF family. UBA4 subfamily. It depends on Zn(2+) as a cofactor.

It localises to the cytoplasm. Its subcellular location is the cytosol. Its pathway is tRNA modification; 5-methoxycarbonylmethyl-2-thiouridine-tRNA biosynthesis. Plays a central role in 2-thiolation of mcm(5)S(2)U at tRNA wobble positions of cytosolic tRNA(Lys), tRNA(Glu) and tRNA(Gln). Acts by mediating the C-terminal thiocarboxylation of sulfur carrier URM1. Its N-terminus first activates URM1 as acyl-adenylate (-COAMP), then the persulfide sulfur on the catalytic cysteine is transferred to URM1 to form thiocarboxylation (-COSH) of its C-terminus. The reaction probably involves hydrogen sulfide that is generated from the persulfide intermediate and that acts as a nucleophile towards URM1. Subsequently, a transient disulfide bond is formed. Does not use thiosulfate as sulfur donor; NFS1 probably acting as a sulfur donor for thiocarboxylation reactions. Prior mcm(5) tRNA modification by the elongator complex is required for 2-thiolation. May also be involved in protein urmylation. This is Adenylyltransferase and sulfurtransferase UBA4 from Candida glabrata (strain ATCC 2001 / BCRC 20586 / JCM 3761 / NBRC 0622 / NRRL Y-65 / CBS 138) (Yeast).